The primary structure comprises 765 residues: Zinc transporter ZIP6 (765 aa).

The N-terminal stretch at 1–20 (MATDLSVIMILTFALWVTSP) is a signal peptide. The Extracellular portion of the chain corresponds to 21-335 (LHELQSTAAF…PKTYSLQIAW (315 aa)). N68 carries N-linked (GlcNAc...) asparagine glycosylation. Basic and acidic residues-rich tracts occupy residues 96 to 135 (DHEHHADHEHHSDHEHHSDHEHHSDHEHHSDHEHHSDHEH) and 174 to 186 (RPAEHMNGRRNIK). Disordered regions lie at residues 96 to 196 (DHEH…EVTS) and 209 to 257 (VETI…SEPR). The span at 187–196 (ESASSSEVTS) shows a compositional bias: low complexity. A compositionally biased stretch (polar residues) spans 224–233 (VNPSTPPSIT). Positions 238-247 (VGRLSRLARK) are enriched in basic residues. Positions 248 to 257 (KSNESVSEPR) are enriched in basic and acidic residues. N-linked (GlcNAc...) asparagine glycosylation is found at N250, N275, and N292. Residues 336 to 356 (LGGFIAISIISFLSLLGVILV) form a helical membrane-spanning segment. Over 357–365 (PLMNRVFFK) the chain is Cytoplasmic. Residues 366 to 386 (FLLSFLVALAVGTLSGDALLH) form a helical membrane-spanning segment. Residues 387–433 (LLPHSHASHQHSHSHEEPAMEMKRGPLFSHLSAQNIEESSYFDSTWK) are Extracellular-facing. The helical transmembrane segment at 434 to 454 (GLTALGGLYFMFLVEHVLTLI) threads the bilayer. Residues 455–667 (KQFKDKKKKN…LKAGMTVKQA (213 aa)) lie on the Cytoplasmic side of the membrane. The interval 458–519 (KDKKKKNQKK…EPSPFDSQQP (62 aa)) is disordered. Positions 475–495 (ESKKQLSKYDSQLSSNEEKVD) form a coiled coil. Residues S481 and S488 each carry the phosphoserine modification. Residues 490–508 (NEEKVDPGERPESYLRADS) are compositionally biased toward basic and acidic residues. Over residues 509-519 (QEPSPFDSQQP) the composition is skewed to polar residues. A helical membrane pass occupies residues 668–688 (VLYNALSAMLAYLGMATGIFI). Residues 689–696 (GHYAENVS) are Extracellular-facing. An N-linked (GlcNAc...) asparagine glycan is attached at N694. A helical membrane pass occupies residues 697-717 (MWIFALTAGLFMYVALVDMVP). Topologically, residues 718-734 (EMLHNDASDHGCSRWGY) are cytoplasmic. Residues 735–755 (FFLQNAGILLGFGIMLLISIF) traverse the membrane as a helical segment. Topologically, residues 756-765 (EHKIVFRINF) are extracellular.

It belongs to the ZIP transporter (TC 2.A.5) family. As to quaternary structure, interacts with SLC39A10; which triggers cells to undergo EMT and mitosis. Found in a complex with SLC39A6, SLC39A10 and with the 'Ser-727' phosphorylated form of STAT3 throughout mitosis. Found in a complex with SLC39A6, SLC39A10 and with NCAM1; this complex controls NCAM1 phosphorylation and integration into focal adhesion complexes during epithelial-to-mesenchymal transition (EMT). Found in a complex with SLC39A6, SLC39A10 and with GSK3B that controls NCAM1 phosphorylation. In terms of processing, cleaved on the N-terminus before locating to the plasma membrane. Post-translationally, N-glycosylated. Phosphorylated by ZAP70 in response to TCR stimulation leading to its activation. As to expression, highly expressed in the brain and testis. In the brain strongly expressed in the CA1 and CA3 regions, Purkinje cells in cerebellum and dentate gyrus in hippocampus. In testis found in spermatids or mature sperms in the central areas of seminiferous tubules.

The protein resides in the cell membrane. It is found in the cell projection. Its subcellular location is the lamellipodium membrane. The protein localises to the membrane raft. It localises to the apical cell membrane. The catalysed reaction is Zn(2+)(in) = Zn(2+)(out). Its function is as follows. Zinc-influx transporter which plays a role in zinc homeostasis and in the induction of epithelial-to-mesenchymal transition (EMT). When associated with SLC39A10, the heterodimer formed by SLC39A10 and SLC39A6 mediates cellular zinc uptake to trigger cells to undergo epithelial- to-mesenchymal transition (EMT). The SLC39A10-SLC39A6 heterodimer also controls NCAM1 phosphorylation and its integration into focal adhesion complexes during EMT. Zinc influx inactivates GSK3B, enabling unphosphorylated SNAI1 in the nucleus to down-regulate adherence genes such as E-cadherin, causing loss of cell adherence. In addition, the SLC39A10-SLC39A6 heterodimer plays an essentiel role in initiating mitosis by importing zinc into cells to initiate a pathway resulting in the onset of mitosis. Participates in the T-cell receptor signaling regulation by mediating cellular zinc uptake into activated lymphocytes. Regulates the zinc influx necessary for proper meiotic progression to metaphase II (MII) that allows the oocyte-to-egg transition. In Mus musculus (Mouse), this protein is Zinc transporter ZIP6.